Here is a 432-residue protein sequence, read N- to C-terminus: Trigger factor (432 aa).

The 86-residue stretch at 161-246 (EDRVTIDFSG…LKKVEERELP (86 aa)) folds into the PPIase FKBP-type domain.

This sequence belongs to the FKBP-type PPIase family. Tig subfamily.

It is found in the cytoplasm. The catalysed reaction is [protein]-peptidylproline (omega=180) = [protein]-peptidylproline (omega=0). Involved in protein export. Acts as a chaperone by maintaining the newly synthesized protein in an open conformation. Functions as a peptidyl-prolyl cis-trans isomerase. This is Trigger factor from Enterobacter sp. (strain 638).